The primary structure comprises 188 residues: Phosphatidylinositol N-acetylglucosaminyltransferase subunit H (188 aa).

This sequence belongs to the PIGH family. In terms of assembly, component of the glycosylphosphatidylinositol-N-acetylglucosaminyltransferase (GPI-GnT) complex composed at least by PIGA, PIGC, PIGH, PIGP, PIGQ, PIGY and DPM2. Interacts with PIGQ.

It localises to the cytoplasm. It participates in glycolipid biosynthesis; glycosylphosphatidylinositol-anchor biosynthesis. Functionally, part of the glycosylphosphatidylinositol-N-acetylglucosaminyltransferase (GPI-GnT) complex that catalyzes the transfer of N-acetylglucosamine from UDP-N-acetylglucosamine to phosphatidylinositol and participates in the first step of GPI biosynthesis. The polypeptide is Phosphatidylinositol N-acetylglucosaminyltransferase subunit H (Mus musculus (Mouse)).